The sequence spans 1072 residues: Carbamoyl phosphate synthase large chain (1072 aa).

Residues 1–401 (MPKRLDINTI…SLLKAVRSLE (401 aa)) are carboxyphosphate synthetic domain. Residues R129, R169, G175, G176, K208, I210, E215, G241, V242, H243, Q284, and E298 each coordinate ATP. The region spanning 133–327 (RTLMQDLNEP…IAKLAAKIAV (195 aa)) is the ATP-grasp 1 domain. 3 residues coordinate Mg(2+): Q284, E298, and N300. Q284, E298, and N300 together coordinate Mn(2+). Residues 402–546 (LGIYHLELDH…YSTYADENES (145 aa)) are oligomerization domain. The interval 547-929 (IVTDRKSVVV…ALYKGLVASG (383 aa)) is carbamoyl phosphate synthetic domain. An ATP-grasp 2 domain is found at 671 to 861 (EAALTKLGIP…MANVATKVIL (191 aa)). The ATP site is built by R707, R746, E752, G777, V778, H779, S780, Q820, and E832. Mg(2+)-binding residues include Q820, E832, and N834. Mn(2+) is bound by residues Q820, E832, and N834. The MGS-like domain maps to 930-1072 (INIPTHGSVI…QTKRHEVVHA (143 aa)). Residues 930–1072 (INIPTHGSVI…QTKRHEVVHA (143 aa)) are allosteric domain.

The protein belongs to the CarB family. Composed of two chains; the small (or glutamine) chain promotes the hydrolysis of glutamine to ammonia, which is used by the large (or ammonia) chain to synthesize carbamoyl phosphate. Tetramer of heterodimers (alpha,beta)4. Mg(2+) serves as cofactor. Requires Mn(2+) as cofactor.

It carries out the reaction hydrogencarbonate + L-glutamine + 2 ATP + H2O = carbamoyl phosphate + L-glutamate + 2 ADP + phosphate + 2 H(+). The enzyme catalyses hydrogencarbonate + NH4(+) + 2 ATP = carbamoyl phosphate + 2 ADP + phosphate + 2 H(+). It participates in amino-acid biosynthesis; L-arginine biosynthesis; carbamoyl phosphate from bicarbonate: step 1/1. It functions in the pathway pyrimidine metabolism; UMP biosynthesis via de novo pathway; (S)-dihydroorotate from bicarbonate: step 1/3. Large subunit of the glutamine-dependent carbamoyl phosphate synthetase (CPSase). CPSase catalyzes the formation of carbamoyl phosphate from the ammonia moiety of glutamine, carbonate, and phosphate donated by ATP, constituting the first step of 2 biosynthetic pathways, one leading to arginine and/or urea and the other to pyrimidine nucleotides. The large subunit (synthetase) binds the substrates ammonia (free or transferred from glutamine from the small subunit), hydrogencarbonate and ATP and carries out an ATP-coupled ligase reaction, activating hydrogencarbonate by forming carboxy phosphate which reacts with ammonia to form carbamoyl phosphate. This chain is Carbamoyl phosphate synthase large chain, found in Bacillus cereus (strain AH187).